The primary structure comprises 715 residues: MMQESATETISNSSMNQNGMSTLSSQLDAGSRDGRSSGDTSSEVSTVELLHLQQQQALQAARQLLLQQQTSGLKSPKSSDKQRPLQVPVSVAMMTPQVITPQQMQQILQQQVLSPQQLQALLQQQQAVMLQQQQLQEFYKKQQEQLHLQLLQQQQQQQQQQQQQQQQQQQQQQQQQQQQQQQQQQQQQQQQHPGKQAKEQQQQQQQQQQLAAQQLVFQQQLLQMQQLQQQQHLLSLQRQGLISIPPGQAALPVQSLPQAGLSPAEIQQLWKEVTGVHSMEDNGIKHGGLDLTTNNSSSTTSSNTSKASPPITHHSIVNGQSSVLSARRDSSSHEETGASHTLYGHGVCKWPGCESICEDFGQFLKHLNNEHALDDRSTAQCRVQMQVVQQLEIQLSKERERLQAMMTHLHMRPSEPKPSPKPLNLVSSVTMSKNMLETSPQSLPQTPTTPTAPVTPITQGPSVITPASVPNVGAIRRRHSDKYNIPMSSEIAPNYEFYKNADVRPPFTYATLIRQAIMESSDRQLTLNEIYSWFTRTFAYFRRNAATWKNAVRHNLSLHKCFVRVENVKGAVWTVDEVEYQKRRSQKITGSPTLVKNIPTSLGYGAALNASLQAALAESSLPLLSNPGLINNASSGLLQAVHEDLNGSLDHIDSNGNSSPGCSPQPHIHSIHVKEEPVIAEDEDCPMSLVTTANHSPELEDDREIEEEPLSEDLE.

Polar residues predominate over residues 1 to 28 (MMQESATETISNSSMNQNGMSTLSSQLD). 2 disordered regions span residues 1-46 (MMQE…EVST) and 281-339 (DNGI…TGAS). Positions 292 to 305 (TTNNSSSTTSSNTS) are enriched in low complexity. Over residues 326-337 (ARRDSSSHEETG) the composition is skewed to basic and acidic residues. A C2H2-type zinc finger spans residues 346–371 (GVCKWPGCESICEDFGQFLKHLNNEH). A leucine-zipper region spans residues 388-409 (VQQLEIQLSKERERLQAMMTHL). Positions 422–426 (PLNLV) are CTBP1-binding. Over residues 438 to 459 (TSPQSLPQTPTTPTAPVTPITQ) the composition is skewed to low complexity. Residues 438–465 (TSPQSLPQTPTTPTAPVTPITQGPSVIT) are disordered. Residues 504 to 594 (RPPFTYATLI…SQKITGSPTL (91 aa)) constitute a DNA-binding region (fork-head). Disordered stretches follow at residues 649–668 (LDHI…QPHI) and 678–715 (VIAE…EDLE). Over residues 699 to 715 (LEDDREIEEEPLSEDLE) the composition is skewed to acidic residues.

Forms homodimers and heterodimers with FOXP1 and FOXP4. Dimerization is required for DNA-binding. Interacts with CTBP1. Interacts with FOXP1. Isoform 1 and isoform 3 interact with TBR1. Interacts with ZMYM2. In terms of tissue distribution, isoform 1 and isoform 6 are expressed in adult and fetal brain, caudate nucleus and lung.

It localises to the nucleus. Transcriptional repressor that may play a role in the specification and differentiation of lung epithelium. May also play a role in developing neural, gastrointestinal and cardiovascular tissues. Can act with CTBP1 to synergistically repress transcription but CTPBP1 is not essential. Plays a role in synapse formation by regulating SRPX2 levels. Involved in neural mechanisms mediating the development of speech and language. In Homo sapiens (Human), this protein is Forkhead box protein P2 (FOXP2).